The chain runs to 378 residues: Flagellar P-ring protein 2 (378 aa).

Positions 1–33 (MHEVSDKTNAIHPLQRVSRALFALGLLCFAAMA) are cleaved as a signal peptide.

The protein belongs to the FlgI family. In terms of assembly, the basal body constitutes a major portion of the flagellar organelle and consists of four rings (L,P,S, and M) mounted on a central rod.

The protein localises to the periplasm. Its subcellular location is the bacterial flagellum basal body. Functionally, assembles around the rod to form the L-ring and probably protects the motor/basal body from shearing forces during rotation. The polypeptide is Flagellar P-ring protein 2 (Hahella chejuensis (strain KCTC 2396)).